Consider the following 154-residue polypeptide: Ribosome maturation factor RimP (154 aa).

It belongs to the RimP family.

Its subcellular location is the cytoplasm. Its function is as follows. Required for maturation of 30S ribosomal subunits. This Flavobacterium psychrophilum (strain ATCC 49511 / DSM 21280 / CIP 103535 / JIP02/86) protein is Ribosome maturation factor RimP.